A 202-amino-acid polypeptide reads, in one-letter code: Nucleoside triphosphate pyrophosphatase (202 aa).

The active-site Proton acceptor is the aspartate 79.

This sequence belongs to the Maf family. A divalent metal cation is required as a cofactor.

Its subcellular location is the cytoplasm. The enzyme catalyses a ribonucleoside 5'-triphosphate + H2O = a ribonucleoside 5'-phosphate + diphosphate + H(+). It catalyses the reaction a 2'-deoxyribonucleoside 5'-triphosphate + H2O = a 2'-deoxyribonucleoside 5'-phosphate + diphosphate + H(+). Nucleoside triphosphate pyrophosphatase. May have a dual role in cell division arrest and in preventing the incorporation of modified nucleotides into cellular nucleic acids. The polypeptide is Nucleoside triphosphate pyrophosphatase (Rhodospirillum rubrum (strain ATCC 11170 / ATH 1.1.1 / DSM 467 / LMG 4362 / NCIMB 8255 / S1)).